The following is a 472-amino-acid chain: Siroheme synthase (472 aa).

The segment at 1 to 204 (MDYLPIFTKL…GQTEKAIALM (204 aa)) is precorrin-2 dehydrogenase /sirohydrochlorin ferrochelatase. Residues 22–23 (SI) and 43–44 (LE) each bind NAD(+). At S128 the chain carries Phosphoserine. The tract at residues 215-472 (GDVALVGAGP…SRDPFLVNLA (258 aa)) is uroporphyrinogen-III C-methyltransferase. P224 provides a ligand contact to S-adenosyl-L-methionine. Catalysis depends on D247, which acts as the Proton acceptor. The Proton donor role is filled by K269. Residues 300 to 302 (GGD), I305, 330 to 331 (TA), M382, and G411 each bind S-adenosyl-L-methionine.

The protein in the N-terminal section; belongs to the precorrin-2 dehydrogenase / sirohydrochlorin ferrochelatase family. It in the C-terminal section; belongs to the precorrin methyltransferase family.

It catalyses the reaction uroporphyrinogen III + 2 S-adenosyl-L-methionine = precorrin-2 + 2 S-adenosyl-L-homocysteine + H(+). The enzyme catalyses precorrin-2 + NAD(+) = sirohydrochlorin + NADH + 2 H(+). The catalysed reaction is siroheme + 2 H(+) = sirohydrochlorin + Fe(2+). It participates in cofactor biosynthesis; adenosylcobalamin biosynthesis; precorrin-2 from uroporphyrinogen III: step 1/1. Its pathway is cofactor biosynthesis; adenosylcobalamin biosynthesis; sirohydrochlorin from precorrin-2: step 1/1. The protein operates within porphyrin-containing compound metabolism; siroheme biosynthesis; precorrin-2 from uroporphyrinogen III: step 1/1. It functions in the pathway porphyrin-containing compound metabolism; siroheme biosynthesis; siroheme from sirohydrochlorin: step 1/1. It participates in porphyrin-containing compound metabolism; siroheme biosynthesis; sirohydrochlorin from precorrin-2: step 1/1. Its function is as follows. Multifunctional enzyme that catalyzes the SAM-dependent methylations of uroporphyrinogen III at position C-2 and C-7 to form precorrin-2 via precorrin-1. Then it catalyzes the NAD-dependent ring dehydrogenation of precorrin-2 to yield sirohydrochlorin. Finally, it catalyzes the ferrochelation of sirohydrochlorin to yield siroheme. This chain is Siroheme synthase, found in Psychromonas ingrahamii (strain DSM 17664 / CCUG 51855 / 37).